Reading from the N-terminus, the 123-residue chain is Beta-defensin 126 (123 aa).

An N-terminal signal peptide occupies residues 1–20 (MKSLLFTLAVFMLLAQLVSG). The segment at 21–63 (NLYVKRCLNDIGICKKTCKPEEVRSEHGWVMCGKRKACCVPAD) is in vitro binds to LPS, mediates antimicrobial activity and inhibits LPS-mediated inflammation. 3 disulfide bridges follow: cysteine 27–cysteine 58, cysteine 34–cysteine 52, and cysteine 38–cysteine 59.

The protein belongs to the beta-defensin family. In terms of assembly, homodimer or homooligomer; disulfide-linked. In terms of processing, O-glycosylated; glycans contain sialic acids alpha(2,3)-linked to galactose and N-acetylgalactosamine. The C-terminal O-glycosylation contributes substantially to the sperm glyocalyx. High-level and epididymis-specific expression. Detected in epithelial cells lining the efferent ductules, initial segment, and cauda regions of the epididymis, but not on spermatozoa.

Its subcellular location is the secreted. Functionally, highly glycosylated atypical beta-defensin involved in several aspects of sperm function. Facilitates sperm transport in the female reproductive tract and contributes to sperm protection against immunodetection; both functions are probably implicating the negative surface charge provided by its O-linked oligosaccharides in the sperm glycocalyx. Involved in binding of sperm to oviductal epithelial cells to form a sperm reservoir until ovulation. Release from the sperm surface during capacitation and ovaluation by an elevation of oviductal fluid pH is unmasking other surface components and allows sperm to penetrate the cumulus matrix and bind to the zona pellucida of the oocyte. In vitro has antimicrobial activity and may inhibit LPS-mediated inflammation. The chain is Beta-defensin 126 (DEFB126) from Macaca fascicularis (Crab-eating macaque).